A 165-amino-acid chain; its full sequence is MSGGLLSLESALRTCKVNTELAARLQSHRTIGPASEKVCPVWNGLDAAGRQVCPDSFANKSPGCHSPMDRLHVENEISRPQYISYLSYGSQGVYGNEYGTIGGHRAAYPDNSIYGISGSFGQQLTSHVKPSMTECSCVRLGTQSQCVAGTSHNTGLSYKTLNGYY.

Belongs to the IIV-6 415R family.

This is an uncharacterized protein from Invertebrate iridescent virus 3 (IIV-3).